A 298-amino-acid chain; its full sequence is H-2 class I histocompatibility antigen, alpha chain (298 aa).

Topologically, residues 1-244 are extracellular; it reads RYEPRARWIE…EPPSSTKTNT (244 aa). An N-linked (GlcNAc...) asparagine glycan is attached at asparagine 43. Cysteine 58 and cysteine 121 are joined by a disulfide. Asparagine 133 is a glycosylation site (N-linked (GlcNAc...) asparagine). In terms of domain architecture, Ig-like C1-type spans 142–230; it reads PKAHVTHHRR…EGLPEPLTLR (89 aa). Cysteine 160 and cysteine 216 are joined by a disulfide. The helical transmembrane segment at 245–265 threads the bilayer; that stretch reads VIIAVPVVLGAVVILGAVMAF. The Cytoplasmic segment spans residues 266–298; it reads VMKRRRNTGGKGGDYALAPVSQSSDMSLPDCKV. The disordered stretch occupies residues 277-298; sequence GGDYALAPVSQSSDMSLPDCKV. A phosphoserine mark is found at serine 289 and serine 292.

It belongs to the MHC class I family. Heterodimer of an alpha chain and a beta chain (beta-2-microglobulin).

Its subcellular location is the membrane. In terms of biological role, involved in the presentation of foreign antigens to the immune system. This chain is H-2 class I histocompatibility antigen, alpha chain (H2-D1), found in Mus musculus (Mouse).